Consider the following 277-residue polypeptide: Reaction center protein L chain (277 aa).

3 consecutive transmembrane segments (helical) span residues 30-52, 84-106, and 113-135; these read FYVG…LIAW, GGIW…LREV, and GIGF…LVVI. 2 residues coordinate (7R,8Z)-bacteriochlorophyll b: His-154 and His-174. A helical transmembrane segment spans residues 173-195; it reads AHMIAITFFFTTCLALALHGGLV. His-191 is a binding site for Fe cation. Phe-217 is a binding site for a ubiquinone. His-231 is a Fe cation binding site. A helical membrane pass occupies residues 233–255; it reads LGLFLALSAVFFSAVCMIISGPV.

It belongs to the reaction center PufL/M/PsbA/D family. As to quaternary structure, reaction center is composed of four bacteriochlorophylls, two bacteriopheophytins, two ubiquinones, one iron, and three highly hydrophobic polypeptide chains (designated L, M, and H).

The protein resides in the cellular chromatophore membrane. The reaction center is a membrane-bound complex that mediates the initial photochemical event in the electron transfer process of photosynthesis. The polypeptide is Reaction center protein L chain (pufL) (Rhodopseudomonas palustris (strain ATCC BAA-98 / CGA009)).